The sequence spans 112 residues: Large ribosomal subunit protein P1 (112 aa).

The interval A80–D112 is disordered. The span at E87–E97 shows a compositional bias: basic and acidic residues. 2 positions are modified to phosphoserine: S99 and S102.

It belongs to the eukaryotic ribosomal protein P1/P2 family. As to quaternary structure, P1 and P2 exist as dimers at the large ribosomal subunit.

Its function is as follows. Plays an important role in the elongation step of protein synthesis. The sequence is that of Large ribosomal subunit protein P1 (RpLP1) from Drosophila melanogaster (Fruit fly).